Reading from the N-terminus, the 123-residue chain is MASLKKSLFLVLFLGLVSLSICEEKKRENEDDAEDENHEEESEEKRGLLDFAKHVIGIASKLGKRSEEKRYHPFGKRSEEKRYFPIPFGKRSEEKRYFPIPIGKRSEEKRYFPIPIGKKKKKK.

The first 22 residues, 1–22 (MASLKKSLFLVLFLGLVSLSIC), serve as a signal peptide directing secretion. The propeptide occupies 23–46 (EEKKRENEDDAEDENHEEESEEKR). The segment at 26 to 46 (KRENEDDAEDENHEEESEEKR) is disordered. Residues 30 to 42 (EDDAEDENHEEES) are compositionally biased toward acidic residues. At Leu62 the chain carries Leucine amide. A propeptide spanning residues 66-70 (SEEKR) is cleaved from the precursor. The residue at position 74 (Phe74) is a Phenylalanine amide. Positions 78-82 (SEEKR) are excised as a propeptide. Phe88 carries the post-translational modification Phenylalanine amide. Positions 92-96 (SEEKR) are excised as a propeptide. The residue at position 102 (Ile102) is an Isoleucine amide. A propeptide spanning residues 106–110 (SEEKR) is cleaved from the precursor. Isoleucine amide is present on Ile116. A propeptide spanning residues 120–123 (KKKK) is cleaved from the precursor.

Belongs to the frog skin active peptide (FSAP) family. Brevinin subfamily. In terms of tissue distribution, expressed by the skin glands.

The protein localises to the secreted. In terms of biological role, fallaxidin-1.1 shows no antibacterial activity against Gram-positive or Gram-negative bacteria. Does not inhibit the formation of NO by neuronal nitric oxide synthase. Has no effect on splenocyte proliferation or smooth muscle contraction. Functionally, fallaxidin-1.2 shows no antibacterial activity against Gram-positive or Gram-negative bacteria. Does not inhibit the formation of NO by neuronal nitric oxide synthase. Has no effect on splenocyte proliferation or smooth muscle contraction. Fallaxidin-1.3 shows no antibacterial activity against Gram-positive or Gram-negative bacteria. Does not inhibit the formation of NO by neuronal nitric oxide synthase. Has no effect on splenocyte proliferation or smooth muscle contraction. Its function is as follows. Fallaxidin-3.2 shows antibacterial activity against the Gram-positive bacteria E.faecalis (MIC=100 uM) and L.lactis (MIC=500 uM). No antibacterial activity against the Gram-positive bacteria B.cereus, L.innocua, M.luteus, S.epidermidis, S.uberis and S.aureus, or the Gram-negative bacteria E.cloacae and E.coli. This Litoria fallax (Eastern dwarf tree frog) protein is Preprofallaxidin-3.